We begin with the raw amino-acid sequence, 194 residues long: Homing endonuclease I-DmoI (194 aa).

A DOD-type homing endonuclease domain is found at 14 to 147; it reads LLGLIIGDGG…VSRWLNNLGV (134 aa). Catalysis depends on residues aspartate 21 and glutamate 117.

Requires a divalent metal cation as cofactor.

Functionally, endonuclease involved in intron homing. Recognizes DNA in the 23S rRNA gene intron (minimally 5'-CCGGGTAAGTTCCGG-3'), cutting after A-8 on the top and C-11 on the bottom strand. Has a slow turnover rate, cuts the coding strand with a slight preference over the non-coding strand. In Desulfurococcus mucosus (Desulfurococcus mobilis), this protein is Homing endonuclease I-DmoI.